A 345-amino-acid polypeptide reads, in one-letter code: Small ribosomal subunit protein mS45 (345 aa).

Residues 1-27 constitute a mitochondrion transit peptide; that stretch reads MSYGLTGTSSKLRGTSSIFSWTQVRHF.

The protein belongs to the mitochondrion-specific ribosomal protein mS45 family. Component of the mitochondrial small ribosomal subunit (mt-SSU). Mature yeast 74S mitochondrial ribosomes consist of a small (37S) and a large (54S) subunit. The 37S small subunit contains a 15S ribosomal RNA (15S mt-rRNA) and 34 different proteins. The 54S large subunit contains a 21S rRNA (21S mt-rRNA) and 46 different proteins.

It is found in the mitochondrion. Its function is as follows. Component of the mitochondrial ribosome (mitoribosome), a dedicated translation machinery responsible for the synthesis of mitochondrial genome-encoded proteins, including at least some of the essential transmembrane subunits of the mitochondrial respiratory chain. The mitoribosomes are attached to the mitochondrial inner membrane and translation products are cotranslationally integrated into the membrane. This Saccharomyces cerevisiae (strain ATCC 204508 / S288c) (Baker's yeast) protein is Small ribosomal subunit protein mS45 (MRPS35).